A 510-amino-acid polypeptide reads, in one-letter code: Probable cytochrome P450 517A2 (510 aa).

A helical membrane pass occupies residues 1 to 21; it reads MRILIIIILIIIVFLVKDTIK. Cys450 is a heme binding site.

Belongs to the cytochrome P450 family. The cofactor is heme.

It localises to the membrane. The sequence is that of Probable cytochrome P450 517A2 (cyp517A2) from Dictyostelium discoideum (Social amoeba).